Consider the following 416-residue polypeptide: Probable mannose-6-phosphate isomerase (416 aa).

Positions 99, 101, 126, and 259 each coordinate Zn(2+). Arg-278 is a catalytic residue.

This sequence belongs to the mannose-6-phosphate isomerase type 1 family. Zn(2+) serves as cofactor.

It localises to the cytoplasm. The catalysed reaction is D-mannose 6-phosphate = D-fructose 6-phosphate. Its pathway is nucleotide-sugar biosynthesis; GDP-alpha-D-mannose biosynthesis; alpha-D-mannose 1-phosphate from D-fructose 6-phosphate: step 1/2. In terms of biological role, involved in the synthesis of the GDP-mannose and dolichol-phosphate-mannose required for a number of critical mannosyl transfer reactions. The sequence is that of Probable mannose-6-phosphate isomerase from Caenorhabditis elegans.